Consider the following 164-residue polypeptide: Protein phosphatase 1 regulatory subunit 14C (164 aa).

The span at 1-19 shows a compositional bias: gly residues; the sequence is MSVVTGGGEAAGGTSGGGA. A disordered region spans residues 1-72; the sequence is MSVVTGGGEA…QRRHQQGKVT (72 aa). Ser-2 is subject to N-acetylserine. Ser-25 carries the phosphoserine modification. Arg-27 carries the omega-N-methylarginine modification. Residue Ser-33 is modified to Phosphoserine. A compositionally biased stretch (low complexity) spans 50-62; sequence VATVAAAGQVQQQ. Thr-72 carries the post-translational modification Phosphothreonine; by ILK1.

It belongs to the PP1 inhibitor family. In terms of processing, has over 600-fold higher inhibitory activity when phosphorylated, creating a molecular switch for regulating the phosphorylation status of PPP1CA substrates and smooth muscle contraction. The main inhibitory site appears to be Thr-72.

The protein resides in the endomembrane system. In terms of biological role, inhibitor of the PP1 regulatory subunit PPP1CA. The sequence is that of Protein phosphatase 1 regulatory subunit 14C (Ppp1r14c) from Rattus norvegicus (Rat).